Consider the following 120-residue polypeptide: Large ribosomal subunit protein uL18 (120 aa).

This sequence belongs to the universal ribosomal protein uL18 family. Part of the 50S ribosomal subunit; part of the 5S rRNA/L5/L18/L25 subcomplex. Contacts the 5S and 23S rRNAs.

This is one of the proteins that bind and probably mediate the attachment of the 5S RNA into the large ribosomal subunit, where it forms part of the central protuberance. This Bartonella tribocorum (strain CIP 105476 / IBS 506) protein is Large ribosomal subunit protein uL18.